The primary structure comprises 437 residues: Type II methyltransferase M.HgiCII (437 aa).

Positions 4 to 431 constitute an SAM-dependent MTase C5-type domain; it reads FRFIDLFAGI…KALPNDHLFE (428 aa). C75 is a catalytic residue.

This sequence belongs to the class I-like SAM-binding methyltransferase superfamily. C5-methyltransferase family.

It catalyses the reaction a 2'-deoxycytidine in DNA + S-adenosyl-L-methionine = a 5-methyl-2'-deoxycytidine in DNA + S-adenosyl-L-homocysteine + H(+). A methylase that recognizes the double-stranded sequence 5'-GGWCC-3', methylates C-? on both strands and protects the DNA from cleavage by the HgiCII endonuclease. The sequence is that of Type II methyltransferase M.HgiCII from Herpetosiphon aurantiacus (Herpetosiphon giganteus).